Consider the following 125-residue polypeptide: Holo-[acyl-carrier-protein] synthase (125 aa).

Residues aspartate 8 and glutamate 57 each coordinate Mg(2+).

Belongs to the P-Pant transferase superfamily. AcpS family. The cofactor is Mg(2+).

The protein localises to the cytoplasm. The catalysed reaction is apo-[ACP] + CoA = holo-[ACP] + adenosine 3',5'-bisphosphate + H(+). Transfers the 4'-phosphopantetheine moiety from coenzyme A to a Ser of acyl-carrier-protein. The chain is Holo-[acyl-carrier-protein] synthase from Azoarcus sp. (strain BH72).